The following is a 346-amino-acid chain: Sulfate/thiosulfate import ATP-binding protein CysA 1 (346 aa).

In terms of domain architecture, ABC transporter spans Val3 to Ile237. Gly35 to Thr42 contacts ATP.

It belongs to the ABC transporter superfamily. Sulfate/tungstate importer (TC 3.A.1.6) family. As to quaternary structure, the complex is composed of two ATP-binding proteins (CysA), two transmembrane proteins (CysT and CysW) and a solute-binding protein (CysP).

It localises to the cell inner membrane. It carries out the reaction sulfate(out) + ATP + H2O = sulfate(in) + ADP + phosphate + H(+). It catalyses the reaction thiosulfate(out) + ATP + H2O = thiosulfate(in) + ADP + phosphate + H(+). Part of the ABC transporter complex CysAWTP involved in sulfate/thiosulfate import. Responsible for energy coupling to the transport system. The chain is Sulfate/thiosulfate import ATP-binding protein CysA 1 from Agrobacterium fabrum (strain C58 / ATCC 33970) (Agrobacterium tumefaciens (strain C58)).